The sequence spans 389 residues: Lipid-A-disaccharide synthase (389 aa).

Belongs to the LpxB family.

It carries out the reaction a lipid X + a UDP-2-N,3-O-bis[(3R)-3-hydroxyacyl]-alpha-D-glucosamine = a lipid A disaccharide + UDP + H(+). The protein operates within bacterial outer membrane biogenesis; LPS lipid A biosynthesis. In terms of biological role, condensation of UDP-2,3-diacylglucosamine and 2,3-diacylglucosamine-1-phosphate to form lipid A disaccharide, a precursor of lipid A, a phosphorylated glycolipid that anchors the lipopolysaccharide to the outer membrane of the cell. This Burkholderia lata (strain ATCC 17760 / DSM 23089 / LMG 22485 / NCIMB 9086 / R18194 / 383) protein is Lipid-A-disaccharide synthase.